The following is a 348-amino-acid chain: Beta-hexosaminidase (348 aa).

Residues D62, R70, R134, and 164-165 each bind substrate; that span reads KH. Residue H177 is the Proton donor/acceptor of the active site. Catalysis depends on D249, which acts as the Nucleophile.

The protein belongs to the glycosyl hydrolase 3 family. NagZ subfamily.

The protein localises to the cytoplasm. The catalysed reaction is Hydrolysis of terminal non-reducing N-acetyl-D-hexosamine residues in N-acetyl-beta-D-hexosaminides.. It participates in cell wall biogenesis; peptidoglycan recycling. Plays a role in peptidoglycan recycling by cleaving the terminal beta-1,4-linked N-acetylglucosamine (GlcNAc) from peptide-linked peptidoglycan fragments, giving rise to free GlcNAc, anhydro-N-acetylmuramic acid and anhydro-N-acetylmuramic acid-linked peptides. The polypeptide is Beta-hexosaminidase (Histophilus somni (strain 2336) (Haemophilus somnus)).